The primary structure comprises 255 residues: MLQISHLYADYGGKPALEDINLTLESGELLVVLGPSGCGKTTLLNLIAGFVPYQHGSIQLAGKRIEGPGAERGVVFQNEGLLPWRNVQDNVAFGLQLAGIEKMQRLEIAHQVLKKVGLEGAEKRYIWQLSGGQRQRVGIARALAANPQLLLLDEPFGALDAFTRDQMQTLLLKLWQETGKQVLLITHDIEEAVFMATELVLLSSGPGRVLERLPLNFARRFVAGESSRSIKSDPQFIAMREYVLSRVFEQREAFS.

Residues 2-229 form the ABC transporter domain; the sequence is LQISHLYADY…RFVAGESSRS (228 aa). ATP is bound at residue 34 to 41; the sequence is GPSGCGKT.

It belongs to the ABC transporter superfamily. Taurine importer (TC 3.A.1.17.1) family. The complex is composed of two ATP-binding proteins (TauB), two transmembrane proteins (TauC) and a solute-binding protein (TauA).

Its subcellular location is the cell inner membrane. The enzyme catalyses taurine(out) + ATP + H2O = taurine(in) + ADP + phosphate + H(+). Functionally, part of the ABC transporter complex TauABC involved in taurine import. Responsible for energy coupling to the transport system. The chain is Taurine import ATP-binding protein TauB from Shigella boydii serotype 4 (strain Sb227).